The sequence spans 287 residues: Probable endoribonuclease YicC (287 aa).

This sequence belongs to the YicC/YloC family. A divalent metal cation serves as cofactor.

Its function is as follows. Probably a ssRNA endonuclease. Might contribute to small RNA (sRNA) regulation. The protein is Probable endoribonuclease YicC of Haemophilus influenzae (strain ATCC 51907 / DSM 11121 / KW20 / Rd).